Consider the following 760-residue polypeptide: MDELVTTQSFTATVTGSPRIGPRRELKRATEGYWAKRTSRSELESVASTLRRDMWSDLAAAGLDSVPVNTFSYYDQMLDTAFMLGALPARVAQVSDDLDQYFALARGNNDIKPLEMTKWFDTNYHYLVPEIEPATTFSLNPGKILGELKEALEQRIPSRPVIIGPVTFLLLSKGINGGGAPIQRLEELVGIYCTLLSLLAENGARWVQFDEPALVTDLSPDAPALAEAVYTALGSVSKRPAIYVATYFGNPGASLAGLARTPIEAIGVDFVCGADTSVAAVPELAGKTLVAGIVDGRNIWRTDLESALSKLATLLGSAATVAVSTSCSTLHVPYSLEPETDLDDNLRSWLAFGAEKVAEVVVLARALRDGRDAVADEIAASNAAVASRRSDPRLHNGQVRARIDSIVASGTHRGDAAQRRTSQDARLHLPPLPTTTIGSYPQTSAIRKARAALQDAEIDEAEYISRMKKEVADAIKLQEQLGLDVLVHGEPERNDMVQYFAEQLGGFFATQNGWVQSYGSRCVRPPILYGDVSRPHPMTIEWITYAQSLTDKPVKGMLTGPVTILAWSFVRDDQPLADTANQVALAIRDETVDLQSAGIAIIQVDEPALRELLPLRRADQDEYLCWAVKAFRLATSGVADSTQIHTHLCYSEFGEVIGAIADLDADVTSIEAARSHMEVLDDLNAVGFANSIGPGVYDIHSPRVPSTDEIAKSLRAALKAIPMQRLWVNPDCGLKTRSVDEVSASLQNMVAAARQVRAGA.

Residues arginine 24–lysine 27 and lysine 118 each bind 5-methyltetrahydropteroyltri-L-glutamate. L-homocysteine-binding positions include isoleucine 437–serine 439 and glutamate 490. Residues isoleucine 437–serine 439 and glutamate 490 contribute to the L-methionine site. Residues arginine 521 to cysteine 522 and tryptophan 567 each bind 5-methyltetrahydropteroyltri-L-glutamate. Aspartate 605 lines the L-homocysteine pocket. Aspartate 605 provides a ligand contact to L-methionine. 5-methyltetrahydropteroyltri-L-glutamate is bound at residue glutamate 611. Zn(2+)-binding residues include histidine 647, cysteine 649, and glutamate 671. The active-site Proton donor is histidine 700. Cysteine 732 contributes to the Zn(2+) binding site.

Belongs to the vitamin-B12 independent methionine synthase family. The cofactor is Zn(2+).

It carries out the reaction 5-methyltetrahydropteroyltri-L-glutamate + L-homocysteine = tetrahydropteroyltri-L-glutamate + L-methionine. The protein operates within amino-acid biosynthesis; L-methionine biosynthesis via de novo pathway; L-methionine from L-homocysteine (MetE route): step 1/1. Its function is as follows. Catalyzes the transfer of a methyl group from 5-methyltetrahydrofolate to homocysteine resulting in methionine formation. This Mycobacterium leprae (strain TN) protein is 5-methyltetrahydropteroyltriglutamate--homocysteine methyltransferase.